An 898-amino-acid chain; its full sequence is Dipeptidyl peptidase 8 (898 aa).

Catalysis depends on charge relay system residues Ser-755, Asp-833, and His-865.

It belongs to the peptidase S9B family. DPPIV subfamily. As to quaternary structure, homodimer. Forms a ternary complex with NLRP1, composed of a DPP8 homodimer, one full-length NLRP1 protein, and one cleaved C-terminus of NLRP1 (NACHT, LRR and PYD domains-containing protein 1, C-terminus). Forms a ternary complex with CARD8, composed of a DPP8 homodimer, one full-length NLRP1 protein, and one cleaved C-terminus of CARD8 (Caspase recruitment domain-containing protein 8, C-terminus). In the ternary complex, only one subunit of the DPP8 homodimer is bound to NLRP1 or CARD8. As to expression, ubiquitously expressed, with highest levels in testis, placenta, prostate, muscle and brain.

The protein resides in the cytoplasm. It catalyses the reaction Release of an N-terminal dipeptide, Xaa-Yaa-|-Zaa-, from a polypeptide, preferentially when Yaa is Pro, provided Zaa is neither Pro nor hydroxyproline.. Inhibited by zinc. Inhibited by the serine proteinase inhibitor 4-(2-aminoethyl)benzenesulphonyl fluoride (AEBSF), and by di-isopropylfluorophosphate. Specifically inhibited by isoindoline derivatives. Inhibited by Val-boroPro (Talabostat, PT-100), a non-selective inhibitor, which triggers pyroptosis in monocytes and macrophages. Dipeptidyl peptidase that cleaves off N-terminal dipeptides from proteins having a Pro or Ala residue at position 2. Acts as a key inhibitor of caspase-1-dependent monocyte and macrophage pyroptosis in resting cells by preventing activation of NLRP1 and CARD8. Sequesters the cleaved C-terminal part of NLRP1 and CARD8, which respectively constitute the active part of the NLRP1 and CARD8 inflammasomes, in a ternary complex, thereby preventing their oligomerization and activation. The dipeptidyl peptidase activity is required to suppress NLRP1 and CARD8; however, neither NLRP1 nor CARD8 are bona fide substrates of DPP8, suggesting the existence of substrate(s) required for NLRP1 and CARD8 inhibition. This is Dipeptidyl peptidase 8 from Homo sapiens (Human).